The following is a 657-amino-acid chain: Glycogen debranching enzyme (657 aa).

Asp336 acts as the Nucleophile in catalysis. Glu371 serves as the catalytic Proton donor. Positions Asn458–Asp467 are enriched in basic and acidic residues. The interval Asn458–Lys479 is disordered.

This sequence belongs to the glycosyl hydrolase 13 family.

The catalysed reaction is Hydrolysis of (1-&gt;6)-alpha-D-glucosidic linkages to branches with degrees of polymerization of three or four glucose residues in limit dextrin.. The protein operates within glycan degradation; glycogen degradation. Functionally, removes maltotriose and maltotetraose chains that are attached by 1,6-alpha-linkage to the limit dextrin main chain, generating a debranched limit dextrin. The protein is Glycogen debranching enzyme of Escherichia coli (strain K12 / DH10B).